A 633-amino-acid chain; its full sequence is Extracellular metalloproteinase 3 (633 aa).

The N-terminal stretch at 1-18 (MHGLLLAGLLALPMNVLA) is a signal peptide. The propeptide occupies 19–246 (HPAEHHASNV…VHNVVDYVAS (228 aa)). 2 N-linked (GlcNAc...) asparagine glycosylation sites follow: asparagine 232 and asparagine 410. Zn(2+) is bound at residue histidine 429. The active site involves glutamate 430. Residue histidine 433 participates in Zn(2+) binding. 2 N-linked (GlcNAc...) asparagine glycosylation sites follow: asparagine 480 and asparagine 622.

It belongs to the peptidase M36 family. Requires Zn(2+) as cofactor.

Its subcellular location is the secreted. In terms of biological role, secreted metalloproteinase that allows assimilation of proteinaceous substrates and probably acts as a virulence factor. This chain is Extracellular metalloproteinase 3 (MEP3), found in Arthroderma gypseum (strain ATCC MYA-4604 / CBS 118893) (Microsporum gypseum).